Reading from the N-terminus, the 1354-residue chain is Enhancer of mRNA-decapping protein 4 homolog (1354 aa).

The disordered stretch occupies residues 18 to 38 (PLSASSSPPPSVHRSPRCGKA). The residue at position 32 (Ser-32) is a Phosphoserine. WD repeat units lie at residues 309 to 348 (EEDS…VRNH) and 363 to 406 (CSLF…CLQT). Residues 552 to 581 (ERSSLNSKRSQTPEDNLLIKEEPESPNSGT) form a disordered region. Residues 554-565 (SSLNSKRSQTPE) show a composition bias toward polar residues. The residue at position 561 (Ser-561) is a Phosphoserine. The residue at position 563 (Thr-563) is a Phosphothreonine. Ser-576 bears the Phosphoserine mark. The residue at position 581 (Thr-581) is a Phosphothreonine. Phosphoserine occurs at positions 759, 762, and 763. Positions 765-803 (SREVQEIMATQDDADAYEAELENLDDDDDDEEEELANSS) form a coiled coil. Residues 788-799 (LDDDDDDEEEEL) show a composition bias toward acidic residues. 2 disordered regions span residues 788–811 (LDDD…AVDG) and 838–884 (NTNN…AGGT). Positions 853–884 (NNNTSVGSNSNNNTATTLSTSNTSSSNNAGGT) are enriched in low complexity. Coiled coils occupy residues 893-936 (ELNA…HSKQ), 969-1036 (NEHK…QAQM), and 1159-1188 (KHRT…QVQE). Ser-1207 bears the Phosphoserine mark. Phosphothreonine is present on residues Thr-1211 and Thr-1317. Tyr-1320 bears the Phosphotyrosine mark.

This sequence belongs to the WD repeat EDC4 family. As to quaternary structure, homodimer. Interacts with Dcp1 and Dcp2. Interacts with Gyf.

Its subcellular location is the cytoplasm. It is found in the P-body. Its function is as follows. In the process of mRNA degradation, seems to play a role in mRNA decapping. Required for silencing a subset of endogenous miRNA targets. This Drosophila melanogaster (Fruit fly) protein is Enhancer of mRNA-decapping protein 4 homolog (Ge-1).